The chain runs to 400 residues: Bifunctional arginine demethylase and lysyl-hydroxylase psr-1 (400 aa).

Residues 146–310 (RKTKKLSEDY…LVWPKTVKGR (165 aa)) enclose the JmjC domain. T189 is a substrate binding site. Fe cation-binding residues include H192 and D194. Position 202 (N202) interacts with 2-oxoglutarate. K209 provides a ligand contact to substrate. H278 contributes to the Fe cation binding site. T290 is a 2-oxoglutarate binding site. Positions 342-400 (DMNESSSDSSSSSSSSDDSSDESDCDDSGRCGGRKRKNDDRSNECPEKMSTTYFQNSLV) are disordered. The span at 346–358 (SSSDSSSSSSSSD) shows a compositional bias: low complexity. Basic and acidic residues predominate over residues 378–388 (KNDDRSNECPE). Positions 390 to 400 (MSTTYFQNSLV) are enriched in polar residues.

This sequence belongs to the JMJD6 family. As to quaternary structure, interacts with ced-5 and ced-12. Requires Fe(2+) as cofactor.

It localises to the nucleus. Functionally, dioxygenase that can both act as a histone arginine demethylase and a lysyl-hydroxylase. The protein is Bifunctional arginine demethylase and lysyl-hydroxylase psr-1 (psr-1) of Caenorhabditis elegans.